Here is a 226-residue protein sequence, read N- to C-terminus: Cytidylate kinase (226 aa).

12-20 serves as a coordination point for ATP; that stretch reads GPSGAGKGT.

It belongs to the cytidylate kinase family. Type 1 subfamily.

It is found in the cytoplasm. It carries out the reaction CMP + ATP = CDP + ADP. The enzyme catalyses dCMP + ATP = dCDP + ADP. This Vibrio vulnificus (strain YJ016) protein is Cytidylate kinase.